The chain runs to 301 residues: Multifunctional dioxygenase ausE (301 aa).

Residues Arg72 and Gln127 each coordinate substrate. Residues His130 and Asp132 each coordinate Fe cation. Position 167 (Thr167) interacts with substrate. Residue His214 coordinates Fe cation. Arg226 lines the substrate pocket.

Belongs to the PhyH family. As to quaternary structure, homodimer. Fe cation serves as cofactor.

It catalyses the reaction preaustinoid A1 + 2-oxoglutarate + O2 = preaustinoid A2 + succinate + CO2 + H2O. The catalysed reaction is preaustinoid A2 + 2-oxoglutarate + O2 = preaustinoid A3 + succinate + CO2 + H2O. The enzyme catalyses berkeleyone A + 2-oxoglutarate + O2 = preaustinoid A + succinate + CO2 + H2O. It functions in the pathway secondary metabolite biosynthesis; terpenoid biosynthesis. Its function is as follows. Multifunctional dioxygenase; part of the gene cluster A that mediates the biosynthesis of the fungal meroterpenoid acetoxydehydroaustin. The first step of the pathway is the synthesis of 3,5-dimethylorsellinic acid by the polyketide synthase ausA. 3,5-dimethylorsellinic acid is then prenylated by the polyprenyl transferase ausN. Further epoxidation by the FAD-dependent monooxygenase ausM and cyclization by the probable terpene cyclase ausL lead to the formation of protoaustinoid A. Protoaustinoid A is then oxidized to spiro-lactone preaustinoid A3 by the combined action of the FAD-binding monooxygenases ausB and ausC, and the dioxygenase ausE. Acid-catalyzed keto-rearrangement and ring contraction of the tetraketide portion of preaustinoid A3 by ausJ lead to the formation of preaustinoid A4. The aldo-keto reductase ausK, with the help of ausH, is involved in the next step by transforming preaustinoid A4 into isoaustinone which is in turn hydroxylated by the P450 monooxygenase ausI to form austinolide. The cytochrome P450 monooxygenase ausG then modifies austinolide to austinol. Austinol is further acetylated to austin by the O-acetyltransferase ausP, which spontaneously changes to dehydroaustin. The cytochrome P450 monooxygenase then converts dehydroaustin is into 7-dehydrodehydroaustin. The hydroxylation catalyzed by ausR permits the second O-acetyltransferase ausQ to add an additional acetyl group to the molecule, leading to the formation of acetoxydehydroaustin. Due to genetic rearrangements of the clusters and the subsequent loss of some enzymes, the end product of the Penicillium brasilianum austinoid biosynthesis clusters is acetoxydehydroaustin. In Penicillium brasilianum, this protein is Multifunctional dioxygenase ausE.